The sequence spans 473 residues: Photosystem II CP43 reaction center protein (473 aa).

Residues 1–14 (MKILYSPRRFYPVE) constitute a propeptide that is removed on maturation. Position 15 is an N-acetylthreonine (threonine 15). A Phosphothreonine modification is found at threonine 15. A run of 5 helical transmembrane segments spans residues 69-93 (LFEV…PHLA), 134-155 (LIGP…KDKN), 178-200 (KALY…REIT), 255-275 (KPFA…LSYS), and 291-312 (WFNN…ASQA). Glutamate 367 contributes to the [CaMn4O5] cluster binding site. A helical membrane pass occupies residues 447–471 (RARAAAAGFEKGIDRDTEPVLSMTP).

The protein belongs to the PsbB/PsbC family. PsbC subfamily. As to quaternary structure, PSII is composed of 1 copy each of membrane proteins PsbA, PsbB, PsbC, PsbD, PsbE, PsbF, PsbH, PsbI, PsbJ, PsbK, PsbL, PsbM, PsbT, PsbX, PsbY, PsbZ, Psb30/Ycf12, at least 3 peripheral proteins of the oxygen-evolving complex and a large number of cofactors. It forms dimeric complexes. The cofactor is Binds multiple chlorophylls and provides some of the ligands for the Ca-4Mn-5O cluster of the oxygen-evolving complex. It may also provide a ligand for a Cl- that is required for oxygen evolution. PSII binds additional chlorophylls, carotenoids and specific lipids..

It localises to the plastid. The protein localises to the chloroplast thylakoid membrane. Its function is as follows. One of the components of the core complex of photosystem II (PSII). It binds chlorophyll and helps catalyze the primary light-induced photochemical processes of PSII. PSII is a light-driven water:plastoquinone oxidoreductase, using light energy to abstract electrons from H(2)O, generating O(2) and a proton gradient subsequently used for ATP formation. This is Photosystem II CP43 reaction center protein from Adiantum capillus-veneris (Maidenhair fern).